The primary structure comprises 154 residues: Myoglobin (154 aa).

The Globin domain occupies 2 to 148 (GLSDGEWQLV…FRNDMAAKYK (147 aa)). Serine 4 is subject to Phosphoserine. Histidine 65 serves as a coordination point for nitrite. Position 65 (histidine 65) interacts with O2. Threonine 68 bears the Phosphothreonine mark. Histidine 94 is a binding site for heme b.

The protein belongs to the globin family. Monomeric.

It localises to the cytoplasm. The protein localises to the sarcoplasm. The catalysed reaction is Fe(III)-heme b-[protein] + nitric oxide + H2O = Fe(II)-heme b-[protein] + nitrite + 2 H(+). The enzyme catalyses H2O2 + AH2 = A + 2 H2O. In terms of biological role, monomeric heme protein which primary function is to store oxygen and facilitate its diffusion within muscle tissues. Reversibly binds oxygen through a pentacoordinated heme iron and enables its timely and efficient release as needed during periods of heightened demand. Depending on the oxidative conditions of tissues and cells, and in addition to its ability to bind oxygen, it also has a nitrite reductase activity whereby it regulates the production of bioactive nitric oxide. Under stress conditions, like hypoxia and anoxia, it also protects cells against reactive oxygen species thanks to its pseudoperoxidase activity. This Lagothrix lagotricha (Brown woolly monkey) protein is Myoglobin (MB).